Reading from the N-terminus, the 57-residue chain is Large ribosomal subunit protein bL32 (57 aa).

It belongs to the bacterial ribosomal protein bL32 family.

This Streptomyces avermitilis (strain ATCC 31267 / DSM 46492 / JCM 5070 / NBRC 14893 / NCIMB 12804 / NRRL 8165 / MA-4680) protein is Large ribosomal subunit protein bL32.